The following is a 499-amino-acid chain: Flotillin-like protein 2 (499 aa).

C37 carries S-palmitoyl cysteine lipidation. Residues 243 to 319 (LREEAKVKAE…LRLTEKLKAE (77 aa)) are a coiled coil.

The protein belongs to the band 7/mec-2 family. Flotillin subfamily. Post-translationally, may be palmitoylated.

The protein resides in the cell membrane. The protein localises to the membrane. Its subcellular location is the caveola. Its function is as follows. May act as a scaffolding protein within caveolar membranes, functionally participating in formation of caveolae or caveolae-like vesicles. This chain is Flotillin-like protein 2 (FLOT2), found in Oryza sativa subsp. japonica (Rice).